Here is a 513-residue protein sequence, read N- to C-terminus: Histidine ammonia-lyase (513 aa).

Positions 144-146 form a cross-link, 5-imidazolinone (Ala-Gly); the sequence is ASG. Serine 145 bears the 2,3-didehydroalanine (Ser) mark.

It belongs to the PAL/histidase family. Contains an active site 4-methylidene-imidazol-5-one (MIO), which is formed autocatalytically by cyclization and dehydration of residues Ala-Ser-Gly.

It is found in the cytoplasm. The catalysed reaction is L-histidine = trans-urocanate + NH4(+). Its pathway is amino-acid degradation; L-histidine degradation into L-glutamate; N-formimidoyl-L-glutamate from L-histidine: step 1/3. This chain is Histidine ammonia-lyase, found in Streptococcus pyogenes serotype M1.